The chain runs to 549 residues: Mitogen-activated protein kinase 15 (549 aa).

The ubiquitin-conjugating stretch occupies residues Met-1–Leu-20. Positions Tyr-14–Val-305 constitute a Protein kinase domain. ATP-binding positions include Leu-20–Val-28 and Lys-43. Asp-138 serves as the catalytic Proton acceptor. At Thr-176 the chain carries Phosphothreonine. The TXY motif lies at Thr-176–Tyr-178. The residue at position 178 (Tyr-178) is a Phosphotyrosine. Positions Leu-266–Leu-286 are necessary to interact with ESRRA, to regulate its subcellular localization and to inhibit its transcriptional activity. A requires for interaction with GABARAP, MAP1LC3B AND GABARAPL1 region spans residues Gln-301–Val-382. A disordered region spans residues Ala-370–Phe-507. PXXXP motif repeat units follow at residues Ser-380–Pro-384 and Pro-387–Pro-391. 2 PXXXP motif; regulates binding with chromatin and interaction with PCNA repeats span residues Arg-395–Pro-399 and Pro-403–Pro-407. A compositionally biased stretch (basic and acidic residues) spans Pro-403 to Ser-416. Arg-451 carries the omega-N-methylarginine modification. Over residues Ser-456–Asn-467 the composition is skewed to polar residues. Low complexity predominate over residues Ala-483–Arg-492. Over residues Leu-493 to Pro-502 the composition is skewed to basic and acidic residues.

Belongs to the protein kinase superfamily. CMGC Ser/Thr protein kinase family. MAP kinase subfamily. Interacts with TGFB1I1. Interacts with CSK/c-Src, ABL1 and RET. Interacts with GABARAP, MAP1LC3B and GABARAPL1; controls, in a kinase-dependent fashion, both basal and starvation-induced autophagy. Interacts with ESRRA; promotes re-localization of ESRRA to the cytoplasm through a XPO1-dependent mechanism then inhibits ESRRA transcriptional activity. Interacts with PCNA; the interaction is chromatin binding- and kinase activity-dependent and prevents MDM2-mediated PCNA destruction by inhibiting the association of PCNA with MDM2. Interacts with DVL2. Interacts with CLIC3; MAPK15 does not phosphorylates CLIC3. Post-translationally, autophosphorylated on Thr-176 and Tyr-178; activates the enzyme. In terms of processing, ubiquitinated. Ubiquitination may allow its tight kinase activity regulation and rapid turnover. May be ubiquitinated by a SCF E3 ligase. In terms of tissue distribution, expressed at all stages of oocyte meiotic maturation.

Its subcellular location is the cytoplasm. The protein resides in the cytoskeleton. It is found in the cilium basal body. The protein localises to the cell junction. It localises to the tight junction. Its subcellular location is the microtubule organizing center. The protein resides in the centrosome. It is found in the centriole. The protein localises to the cytoplasmic vesicle. It localises to the autophagosome. Its subcellular location is the golgi apparatus. The protein resides in the nucleus. It is found in the spindle. It catalyses the reaction L-seryl-[protein] + ATP = O-phospho-L-seryl-[protein] + ADP + H(+). The catalysed reaction is L-threonyl-[protein] + ATP = O-phospho-L-threonyl-[protein] + ADP + H(+). With respect to regulation, activated by threonine and tyrosine phosphorylation. Inhibited by dual specificity phosphatases, such as DUSP1. Phosphorylation and activation in response to DNA damaging agents, serum stimulation. Constitutively activated when phosphorylated on Tyr-178. Activity depends on the relative rates of MAPK15 autophosphorylation and dephosphorylation by PTPN1. In terms of biological role, atypical MAPK protein that regulates several process such as autophagy, ciliogenesis, protein trafficking/secretion and genome integrity, in a kinase activity-dependent manner. Controls both, basal and starvation-induced autophagy throught its interaction with GABARAP, MAP1LC3B and GABARAPL1 leading to autophagosome formation, SQSTM1 degradation and reduced MAP1LC3B inhibitory phosphorylation. Regulates primary cilium formation and the localization of ciliary proteins involved in cilium structure, transport, and signaling. Prevents the relocation of the sugar-adding enzymes from the Golgi to the endoplasmic reticulum, thereby restricting the production of sugar-coated proteins. Upon amino-acid starvation, mediates transitional endoplasmic reticulum site disassembly and inhibition of secretion. Binds to chromatin leading to MAPK15 activation and interaction with PCNA, that which protects genomic integrity by inhibiting MDM2-mediated degradation of PCNA. Regulates DA transporter (DAT) activity and protein expression via activation of RhoA. In response to H(2)O(2) treatment phosphorylates ELAVL1, thus preventing it from binding to the PDCD4 3'UTR and rendering the PDCD4 mRNA accessible to miR-21 and leading to its degradation and loss of protein expression. Also functions in a kinase activity-independent manner as a negative regulator of growth. Phosphorylates in vitro FOS and MBP. During oocyte maturation, plays a key role in the microtubule organization and meiotic cell cycle progression in oocytes, fertilized eggs, and early embryos. Interacts with ESRRA promoting its re-localization from the nucleus to the cytoplasm and then prevents its transcriptional activity. This is Mitogen-activated protein kinase 15 from Mus musculus (Mouse).